The chain runs to 507 residues: MISLFWADALVKDLSGPQRVSTGISPSGPIHVGNMREILTGDILFKAITKRGLESDFIYLCDDMDPLRKVYPFLSKDYERYVGQPLKNIPAPQGAGKYSDYYLEPFVRVMKEANIPARVIKTSDLYESGMLAQACDIAINNREKIKDILETVSGRKIEGDFYPYEPLCEKCGRISTTHVISYSYPYAEYACKCGHHGFADIRKAEGKMPWRVEWPAKWFALKVTVEPFGKDHGAPGGSYDTGRRIAREVFGIEPPVPLMYERIILKGKGAMHSSTGLAIAASEIMEVIPPDLLRYMIARVNPGRHIDFDPGMGILALSDELEKLQDAYFENRASLDEDQAAMVEYSLVNKDRKPYPVDFRHLVTLVQIYRTEDEILRAVKKGQPSDFIEADFRKEIEYARRWLERYAPESVKFRILPVDQKIELSDSDLAILSDFLNGIEDMPWNSESIHDRIYEISQKFKTNPESVFTLFYRVFIGKDRGPRLGYFLFNLGKDFVRERIRNVIRDH.

The short motif at 26–34 (PSGPIHVGN) is the 'HIGH' region element. Residues 270–274 (AMHSS) carry the 'KMSKS' region motif.

This sequence belongs to the class-I aminoacyl-tRNA synthetase family.

It localises to the cytoplasm. It catalyses the reaction tRNA(Lys) + L-lysine + ATP = L-lysyl-tRNA(Lys) + AMP + diphosphate. The chain is Lysine--tRNA ligase (lysS) from Thermoplasma acidophilum (strain ATCC 25905 / DSM 1728 / JCM 9062 / NBRC 15155 / AMRC-C165).